A 186-amino-acid chain; its full sequence is MSDSASISSGIADRYATAIFELAKEENNIGALEAGADLLDAALKESAEFRDLISSPVYSRDEQAGAIGAIAKKLELAPMLSNALALMASKRRLFVLPQLVASLRALIAEEKGEMTADVISAQPLSKANLDELTKVLSASADKTVKVNATVDNSLIGGLVVKMGSKMIDTSIRAKLNALQNTMKEVG.

Belongs to the ATPase delta chain family. As to quaternary structure, F-type ATPases have 2 components, F(1) - the catalytic core - and F(0) - the membrane proton channel. F(1) has five subunits: alpha(3), beta(3), gamma(1), delta(1), epsilon(1). CF(0) has four main subunits: a(1), b(1), b'(1) and c(10-14). The alpha and beta chains form an alternating ring which encloses part of the gamma chain. F(1) is attached to F(0) by a central stalk formed by the gamma and epsilon chains, while a peripheral stalk is formed by the delta, b and b' chains.

The protein localises to the cell inner membrane. In terms of biological role, f(1)F(0) ATP synthase produces ATP from ADP in the presence of a proton or sodium gradient. F-type ATPases consist of two structural domains, F(1) containing the extramembraneous catalytic core and F(0) containing the membrane proton channel, linked together by a central stalk and a peripheral stalk. During catalysis, ATP synthesis in the catalytic domain of F(1) is coupled via a rotary mechanism of the central stalk subunits to proton translocation. Functionally, this protein is part of the stalk that links CF(0) to CF(1). It either transmits conformational changes from CF(0) to CF(1) or is implicated in proton conduction. This chain is ATP synthase subunit delta, found in Dinoroseobacter shibae (strain DSM 16493 / NCIMB 14021 / DFL 12).